A 155-amino-acid polypeptide reads, in one-letter code: Arginine repressor (155 aa).

This sequence belongs to the ArgR family.

Its subcellular location is the cytoplasm. The protein operates within amino-acid biosynthesis; L-arginine biosynthesis [regulation]. Its function is as follows. Regulates arginine biosynthesis genes. The chain is Arginine repressor from Histophilus somni (strain 2336) (Haemophilus somnus).